Consider the following 341-residue polypeptide: L-threonine 3-dehydrogenase (341 aa).

Residue Cys-38 participates in Zn(2+) binding. Active-site charge relay system residues include Thr-40 and His-43. 6 residues coordinate Zn(2+): His-63, Glu-64, Cys-93, Cys-96, Cys-99, and Cys-107. NAD(+)-binding positions include Ile-175, Asp-195, Arg-200, 262 to 264, and 286 to 287; these read LGI and IY.

This sequence belongs to the zinc-containing alcohol dehydrogenase family. As to quaternary structure, homotetramer. It depends on Zn(2+) as a cofactor.

It localises to the cytoplasm. It catalyses the reaction L-threonine + NAD(+) = (2S)-2-amino-3-oxobutanoate + NADH + H(+). It participates in amino-acid degradation; L-threonine degradation via oxydo-reductase pathway; glycine from L-threonine: step 1/2. Catalyzes the NAD(+)-dependent oxidation of L-threonine to 2-amino-3-ketobutyrate. The sequence is that of L-threonine 3-dehydrogenase from Shewanella baltica (strain OS185).